The primary structure comprises 497 residues: Glutathione hydrolase 6 (497 aa).

Positions 1–34 are disordered; the sequence is MDATTGPVHYHKLQLWEPGVESEEEEEEEEEEIA. Over 1 to 51 the chain is Cytoplasmic; it reads MDATTGPVHYHKLQLWEPGVESEEEEEEEEEEIAEPLVLSLRRLQNTPRNE. Residues 20-34 show a composition bias toward acidic residues; sequence VESEEEEEEEEEEIA. A helical; Signal-anchor for type II membrane protein transmembrane segment spans residues 52 to 72; it reads VGGLPGAWARLLAGLLLLAVS. Topologically, residues 73–497 are extracellular; the sequence is SSLALRQLHS…PSGCCPFQGY (425 aa). Residues Asn164, Asn169, Asn367, and Asn378 are each glycosylated (N-linked (GlcNAc...) asparagine).

It belongs to the gamma-glutamyltransferase family. As to quaternary structure, heterodimer composed of the light and heavy chains. The active site is located in the light chain. In terms of processing, cleaved by autocatalysis into a large and a small subunit and the autocatalytic cleavage is essential to the functional activation of the enzyme.

It is found in the membrane. It carries out the reaction an N-terminal (5-L-glutamyl)-[peptide] + an alpha-amino acid = 5-L-glutamyl amino acid + an N-terminal L-alpha-aminoacyl-[peptide]. It catalyses the reaction glutathione + H2O = L-cysteinylglycine + L-glutamate. The catalysed reaction is an S-substituted glutathione + H2O = an S-substituted L-cysteinylglycine + L-glutamate. The protein operates within sulfur metabolism; glutathione metabolism. Its function is as follows. Hydrolyzes and transfers gamma-glutamyl moieties from glutathione and other gamma-glutamyl compounds to acceptors. This chain is Glutathione hydrolase 6, found in Mus musculus (Mouse).